Reading from the N-terminus, the 81-residue chain is ATP synthase subunit c (81 aa).

2 consecutive transmembrane segments (helical) span residues 3 to 23 (PLIA…GAIG) and 57 to 77 (LAFM…LLFA).

Belongs to the ATPase C chain family. In terms of assembly, F-type ATPases have 2 components, F(1) - the catalytic core - and F(0) - the membrane proton channel. F(1) has five subunits: alpha(3), beta(3), gamma(1), delta(1), epsilon(1). F(0) has four main subunits: a(1), b(1), b'(1) and c(10-14). The alpha and beta chains form an alternating ring which encloses part of the gamma chain. F(1) is attached to F(0) by a central stalk formed by the gamma and epsilon chains, while a peripheral stalk is formed by the delta, b and b' chains.

It is found in the cellular thylakoid membrane. In terms of biological role, f(1)F(0) ATP synthase produces ATP from ADP in the presence of a proton or sodium gradient. F-type ATPases consist of two structural domains, F(1) containing the extramembraneous catalytic core and F(0) containing the membrane proton channel, linked together by a central stalk and a peripheral stalk. During catalysis, ATP synthesis in the catalytic domain of F(1) is coupled via a rotary mechanism of the central stalk subunits to proton translocation. Key component of the F(0) channel; it plays a direct role in translocation across the membrane. A homomeric c-ring of between 10-14 subunits forms the central stalk rotor element with the F(1) delta and epsilon subunits. The chain is ATP synthase subunit c from Trichodesmium erythraeum (strain IMS101).